A 340-amino-acid polypeptide reads, in one-letter code: Phospho-N-acetylmuramoyl-pentapeptide-transferase (340 aa).

10 helical membrane passes run 3 to 23 (MSLIAGVAAFVLTVLAMPHFI), 53 to 73 (GGTVFLVVAILISLIFNFHVF), 79 to 99 (AYGATAGILFVILIYGIIGFL), 119 to 139 (MALQIVAGLLFYFIHVLPSGT), 144 to 164 (IGGLTIQLGVFYVLFVLFWIV), 176 to 196 (IDGLASVSVVISLIAYGIIAF), 200 to 220 (ELAILTIIITMIGALLGFFVF), 227 to 247 (VFMGDVGSLSLGAMLAVISIA), 250 to 270 (VEWTLLLIGVVYVLETASVML), and 315 to 335 (VDAFLWTIGALASSITLWMVL).

Belongs to the glycosyltransferase 4 family. MraY subfamily. Requires Mg(2+) as cofactor.

The protein localises to the cell membrane. It carries out the reaction UDP-N-acetyl-alpha-D-muramoyl-L-alanyl-gamma-D-glutamyl-L-lysyl-D-alanyl-D-alanine + di-trans,octa-cis-undecaprenyl phosphate = Mur2Ac(oyl-L-Ala-gamma-D-Glu-L-Lys-D-Ala-D-Ala)-di-trans,octa-cis-undecaprenyl diphosphate + UMP. It participates in cell wall biogenesis; peptidoglycan biosynthesis. Its function is as follows. Catalyzes the initial step of the lipid cycle reactions in the biosynthesis of the cell wall peptidoglycan: transfers peptidoglycan precursor phospho-MurNAc-pentapeptide from UDP-MurNAc-pentapeptide onto the lipid carrier undecaprenyl phosphate, yielding undecaprenyl-pyrophosphoryl-MurNAc-pentapeptide, known as lipid I. This Streptococcus thermophilus (strain CNRZ 1066) protein is Phospho-N-acetylmuramoyl-pentapeptide-transferase.